The primary structure comprises 267 residues: Indole-3-glycerol phosphate synthase (267 aa).

The protein belongs to the TrpC family.

The catalysed reaction is 1-(2-carboxyphenylamino)-1-deoxy-D-ribulose 5-phosphate + H(+) = (1S,2R)-1-C-(indol-3-yl)glycerol 3-phosphate + CO2 + H2O. It participates in amino-acid biosynthesis; L-tryptophan biosynthesis; L-tryptophan from chorismate: step 4/5. The sequence is that of Indole-3-glycerol phosphate synthase from Polynucleobacter asymbioticus (strain DSM 18221 / CIP 109841 / QLW-P1DMWA-1) (Polynucleobacter necessarius subsp. asymbioticus).